The following is a 2262-amino-acid chain: Klarsicht protein (2262 aa).

Disordered regions lie at residues 1-140 (MEMQ…VGND), 345-410 (QQQQ…GEGN), 442-475 (AANG…LNEV), 514-561 (QSQS…PDIG), 800-832 (ATSS…DKEN), 859-898 (SNYD…QLQM), 1000-1031 (HLPP…VSPV), 1115-1157 (PSCK…SEGF), 1246-1316 (SGLA…ELGG), and 1533-1670 (VRRK…QQSR). Positions 1 to 1774 (MEMQQENETG…KPTPELLDTE (1774 aa)) are required for apical microtubules localization. Topologically, residues 1–2215 (MEMQQENETG…KRGWAWRIAR (2215 aa)) are cytoplasmic. The segment covering 58–67 (KIEHTTKPLK) has biased composition (basic and acidic residues). Residues 131-140 (NYGTNSVGND) show a composition bias toward polar residues. Residues 345–402 (QQQQLSSQQPASLTSNCSSESTSESATKSSSLSSGFASDPVTTPIGTAAAAPPSSSTH) show a composition bias toward low complexity. Positions 446 to 475 (LDDDEDEEEDTEDDSFGYEGEATEDDLNEV) are enriched in acidic residues. Low complexity predominate over residues 514–525 (QSQSRSQQVPSQ). Residues 546–560 (EADEELEEEDEDPDI) are compositionally biased toward acidic residues. 2 stretches are compositionally biased toward low complexity: residues 809 to 818 (STAVSSTTAT) and 859 to 881 (SNYD…SNSN). Residues 882 to 894 (GRLTETSATSRVT) show a composition bias toward polar residues. The segment covering 1006-1018 (PAKSAKSTKSQAS) has biased composition (low complexity). Residues 1019-1028 (NATVSGSTLV) are compositionally biased toward polar residues. Over residues 1246–1259 (SGLASHSISESALD) the composition is skewed to polar residues. A compositionally biased stretch (low complexity) spans 1267–1280 (PRAASSSGTGSNAA). A compositionally biased stretch (basic residues) spans 1288–1299 (SLRRRKARKKRI). The segment covering 1550 to 1559 (QSDQQQQQLQ) has biased composition (low complexity). Residues 1560-1583 (VTPSLSASATALMTTPKNQSTSHQ) are compositionally biased toward polar residues. Composition is skewed to basic and acidic residues over residues 1586–1596 (HRAESVGRKLD) and 1610–1640 (RTSE…EKCI). The stretch at 1809–1842 (LTKQERRLQSALEEQEQQQESEQLKQQKLVEEEK) forms a coiled coil. A disordered region spans residues 2092–2205 (HQQKQQIQQN…GEGADPAQTS (114 aa)). Residues 2093-2105 (QQKQQIQQNQTQQ) show a composition bias toward low complexity. Over residues 2130–2142 (RRGKGARKARQAK) the composition is skewed to basic residues. Residues 2207 to 2262 (RGWAWRIARAAVPMQVALFTIFCAACLMQPNCCDNLNNLSMSFTPQLRYIRGPPPI) enclose the KASH domain. The chain crosses the membrane as a helical; Anchor for type IV membrane protein span at residues 2216–2236 (AAVPMQVALFTIFCAACLMQP). The Perinuclear space segment spans residues 2237-2262 (NCCDNLNNLSMSFTPQLRYIRGPPPI).

The protein belongs to the nesprin family. In terms of assembly, core component of LINC complexes which are composed of inner nuclear membrane SUN domain-containing proteins coupled to outer nuclear membrane KASH domain-containing nesprins. Interacts with kud. Interacts with Msp300; this interaction allows the anchoring of Msp300 nuclear ring structure to the nuclear envelope. Expressed ubiquitously in the eye disk, but at much higher levels posterior to the morphogenetic furrow. Expressed in R-cells and also in non-neural cone cells.

The protein localises to the cytoplasm. The protein resides in the cytoskeleton. It is found in the microtubule organizing center. Its subcellular location is the perinuclear region. It localises to the nucleus membrane. The protein localises to the nucleus envelope. Component of the LINC (LInker of Nucleoskeleton and Cytoskeleton) complex involved in the connection between the nuclear lamina and the cytoskeleton. Plays a role in the nuclear positioning and links the nucleus to the microtubule organizing center (MTOC). Collaborates with Klar to promote even spacing of the myonuclei at the periphery of striated muscle fibers by mediating a tight association between a nuclear ring structure of Msp300 and the plus ends of a unique astral microtubule (MT) network. The sequence is that of Klarsicht protein from Drosophila melanogaster (Fruit fly).